The chain runs to 421 residues: Testin (421 aa).

The 108-residue stretch at 92–199 (MILTNPVAAK…GDVKLPCEMD (108 aa)) folds into the PET domain. Residues 133–164 (EKQPVAGSEGAQYRKKQLAKQLPAHDQDPSKC) are disordered. Residues 155–164 (PAHDQDPSKC) show a composition bias toward basic and acidic residues. LIM zinc-binding domains are found at residues 234–297 (YSCY…CDSE), 299–359 (PRCA…NHAV), and 362–421 (QGCH…KMMS).

This sequence belongs to the prickle / espinas / testin family. In terms of assembly, interacts via LIM domain 1 with ZYX. Interacts (via LIM domain 3) with ENAH and VASP. Interacts with ALKBH4, talin, actin, alpha-actinin, GRIP1 and PXN. Interacts (via LIM domain 2) with ACTL7A (via N-terminus). Heterodimer with ACTL7A; the heterodimer interacts with ENAH to form a heterotrimer.

The protein resides in the cytoplasm. It localises to the cell junction. It is found in the focal adhesion. Functionally, scaffold protein that may play a role in cell adhesion, cell spreading and in the reorganization of the actin cytoskeleton. Plays a role in the regulation of cell proliferation. May act as a tumor suppressor. The protein is Testin (TES) of Ateles geoffroyi (Black-handed spider monkey).